The following is a 509-amino-acid chain: MIKRALISVFYKDGILDFAKFLTSKNVEIVSTGGTYKYLKENNIPVIEVSEVTGAKEMLDGRVKTLDPKIHGAILAIRDNPTHMETIKERGITPIDMVIVNLYPFFEKVQDDNLKFEEKIEFIDIGGPTMLRSAAKSFKDVVVISDVKDYDLVKSEMEKGEVSFETKKYLASKVFNLTSAYDAAVSEFMFNSLESKEDKKLNYLNMSYALQEELRYGENPHQGASYYVSTTDKGSMKDFEQLNGKELSFNNIRDMDIALKIVLEFDESKKEYACSAIKHSTPCGAALGSSVLEAYNRTYECDPTSIFGGIVAFNSTVDEATAKELIKIFLEIVIAKDFTPEALEVLKTKKNLRVIKYKTNTNDKINLVKVDGGLLVQDEDTTLIEDYKVVTEKKPTEEEMKNLIFGIKVVKYAKSNAIVVIKDFMAKGIGSGQTNRIWACEDALERAGDGVVMASDAFFPFRDVVDACAKYNIKAIIQPGGSMRDQESIDACNEHGIAMIFTGIRHFKH.

The 145-residue stretch at 1-145 (MIKRALISVF…KSFKDVVVIS (145 aa)) folds into the MGS-like domain.

The protein belongs to the PurH family.

It carries out the reaction (6R)-10-formyltetrahydrofolate + 5-amino-1-(5-phospho-beta-D-ribosyl)imidazole-4-carboxamide = 5-formamido-1-(5-phospho-D-ribosyl)imidazole-4-carboxamide + (6S)-5,6,7,8-tetrahydrofolate. The enzyme catalyses IMP + H2O = 5-formamido-1-(5-phospho-D-ribosyl)imidazole-4-carboxamide. The protein operates within purine metabolism; IMP biosynthesis via de novo pathway; 5-formamido-1-(5-phospho-D-ribosyl)imidazole-4-carboxamide from 5-amino-1-(5-phospho-D-ribosyl)imidazole-4-carboxamide (10-formyl THF route): step 1/1. Its pathway is purine metabolism; IMP biosynthesis via de novo pathway; IMP from 5-formamido-1-(5-phospho-D-ribosyl)imidazole-4-carboxamide: step 1/1. The protein is Bifunctional purine biosynthesis protein PurH of Brachyspira hyodysenteriae (strain ATCC 49526 / WA1).